A 160-amino-acid polypeptide reads, in one-letter code: Globin CTT-II beta (160 aa).

A signal peptide spans 1 to 15 (MKFLVLALCIAAAVA). Residues 17 to 160 (PLSADEASLV…NVFNMMFSYL (144 aa)) enclose the Globin domain. Heme b is bound by residues histidine 75 and histidine 110.

The protein belongs to the globin family. Homodimer.

This Chironomus thummi thummi (Midge) protein is Globin CTT-II beta.